Reading from the N-terminus, the 532-residue chain is Flavin-containing monooxygenase 1 (532 aa).

The Lumenal segment spans residues 1–510; sequence MVKRVAIVGA…TRTVQETPST (510 aa). FAD is bound by residues 9–13, Glu-32, 40–41, and 61–62; these read GAGVS, LW, and NS. Residues 60 to 61 and 195 to 198 contribute to the NADP(+) site; these read SN and SGTD. The chain crosses the membrane as a helical span at residues 511-531; sequence FETLLKLFSFLALLVAVFFIF. Leu-532 is a topological domain (cytoplasmic).

It belongs to the FMO family. The cofactor is FAD. In terms of tissue distribution, expressed in liver, lung and kidney and to a lesser extent in the heart and brain.

It localises to the endoplasmic reticulum membrane. The catalysed reaction is hypotaurine + NADPH + O2 + H(+) = taurine + NADP(+) + H2O. The enzyme catalyses hypotaurine + NADH + O2 + H(+) = taurine + NAD(+) + H2O. It catalyses the reaction trimethylamine + NADPH + O2 = trimethylamine N-oxide + NADP(+) + H2O. It carries out the reaction N,N-dimethylaniline + NADPH + O2 + H(+) = N,N-dimethylaniline N-oxide + NADP(+) + H2O. Functionally, broad spectrum monooxygenase that catalyzes the oxygenation of a wide variety of nitrogen- and sulfur-containing compounds including xenobiotics. Catalyzes the S-oxygenation of hypotaurine to produce taurine, an organic osmolyte involved in cell volume regulation as well as a variety of cytoprotective and developmental processes. In vitro, catalyzes the N-oxygenation of trimethylamine (TMA) to produce trimethylamine N-oxide (TMAO) and could therefore participate to the detoxification of this compound that is generated by the action of gut microbiota from dietary precursors such as choline, choline containing compounds, betaine or L-carnitine. The sequence is that of Flavin-containing monooxygenase 1 from Rattus norvegicus (Rat).